We begin with the raw amino-acid sequence, 301 residues long: UDP-3-O-acyl-N-acetylglucosamine deacetylase (301 aa).

Residues H81, H237, and D241 each coordinate Zn(2+). H264 functions as the Proton donor in the catalytic mechanism.

Belongs to the LpxC family. It depends on Zn(2+) as a cofactor.

It catalyses the reaction a UDP-3-O-[(3R)-3-hydroxyacyl]-N-acetyl-alpha-D-glucosamine + H2O = a UDP-3-O-[(3R)-3-hydroxyacyl]-alpha-D-glucosamine + acetate. It functions in the pathway glycolipid biosynthesis; lipid IV(A) biosynthesis; lipid IV(A) from (3R)-3-hydroxytetradecanoyl-[acyl-carrier-protein] and UDP-N-acetyl-alpha-D-glucosamine: step 2/6. In terms of biological role, catalyzes the hydrolysis of UDP-3-O-myristoyl-N-acetylglucosamine to form UDP-3-O-myristoylglucosamine and acetate, the committed step in lipid A biosynthesis. This chain is UDP-3-O-acyl-N-acetylglucosamine deacetylase, found in Leptospira interrogans serogroup Icterohaemorrhagiae serovar copenhageni (strain Fiocruz L1-130).